We begin with the raw amino-acid sequence, 78 residues long: Conotoxin TsMSGL-13 (78 aa).

Positions 1-24 (MSGLGIMVLTLLLFMFMATSHQDA) are cleaved as a signal peptide. Positions 25 to 44 (GEKQATQRDAINVRRRRSIT) are excised as a propeptide. 3 cysteine pairs are disulfide-bonded: Cys-51-Cys-63, Cys-55-Cys-72, and Cys-62-Cys-76. Phe-77 carries the phenylalanine amide modification.

This sequence belongs to the conotoxin O3 superfamily. Expressed by the venom duct.

Its subcellular location is the secreted. The polypeptide is Conotoxin TsMSGL-13 (Conus tessulatus (Tessellate cone)).